A 196-amino-acid polypeptide reads, in one-letter code: UPF0340 protein TT_C0214 (196 aa).

It belongs to the UPF0340 family.

This Thermus thermophilus (strain ATCC BAA-163 / DSM 7039 / HB27) protein is UPF0340 protein TT_C0214.